Here is a 178-residue protein sequence, read N- to C-terminus: Translation initiation factor IF-3 (178 aa).

It belongs to the IF-3 family. In terms of assembly, monomer.

The protein localises to the cytoplasm. In terms of biological role, IF-3 binds to the 30S ribosomal subunit and shifts the equilibrium between 70S ribosomes and their 50S and 30S subunits in favor of the free subunits, thus enhancing the availability of 30S subunits on which protein synthesis initiation begins. The protein is Translation initiation factor IF-3 of Ralstonia nicotianae (strain ATCC BAA-1114 / GMI1000) (Ralstonia solanacearum).